Consider the following 476-residue polypeptide: Methylenetetrahydrofolate--tRNA-(uracil-5-)-methyltransferase TrmFO (476 aa).

FAD is bound at residue 14–19 (GGGLAG).

The protein belongs to the MnmG family. TrmFO subfamily. It depends on FAD as a cofactor.

Its subcellular location is the cytoplasm. It carries out the reaction uridine(54) in tRNA + (6R)-5,10-methylene-5,6,7,8-tetrahydrofolate + NADH + H(+) = 5-methyluridine(54) in tRNA + (6S)-5,6,7,8-tetrahydrofolate + NAD(+). It catalyses the reaction uridine(54) in tRNA + (6R)-5,10-methylene-5,6,7,8-tetrahydrofolate + NADPH + H(+) = 5-methyluridine(54) in tRNA + (6S)-5,6,7,8-tetrahydrofolate + NADP(+). Functionally, catalyzes the folate-dependent formation of 5-methyl-uridine at position 54 (M-5-U54) in all tRNAs. This Brucella anthropi (strain ATCC 49188 / DSM 6882 / CCUG 24695 / JCM 21032 / LMG 3331 / NBRC 15819 / NCTC 12168 / Alc 37) (Ochrobactrum anthropi) protein is Methylenetetrahydrofolate--tRNA-(uracil-5-)-methyltransferase TrmFO.